Consider the following 144-residue polypeptide: Large ribosomal subunit protein uL16 (144 aa).

Belongs to the universal ribosomal protein uL16 family. As to quaternary structure, part of the 50S ribosomal subunit.

Functionally, binds 23S rRNA and is also seen to make contacts with the A and possibly P site tRNAs. This is Large ribosomal subunit protein uL16 from Listeria innocua serovar 6a (strain ATCC BAA-680 / CLIP 11262).